The primary structure comprises 603 residues: Mono(2-hydroxyethyl) terephthalate hydrolase (603 aa).

Positions 1 to 17 (MQTTVTTMLLASVALAA) are cleaved as a signal peptide. A lipid anchor (N-palmitoyl cysteine) is attached at cysteine 18. A lipid anchor (S-diacylglycerol cysteine) is attached at cysteine 18. The interval 24–44 (TPLPLPQQQPPQQEPPPPPVP) is disordered. Residues 26 to 44 (LPLPQQQPPQQEPPPPPVP) show a composition bias toward pro residues. The cysteines at positions 51 and 92 are disulfide-linked. 4-[(2-hydroxyethoxy)carbonyl]benzoate is bound at residue glycine 132. 4 cysteine pairs are disulfide-bonded: cysteine 224/cysteine 529, cysteine 303/cysteine 320, cysteine 340/cysteine 348, and cysteine 577/cysteine 599. Residue serine 225 is the Acyl-ester intermediate of the active site. Residue glutamate 226 participates in 4-[(2-hydroxyethoxy)carbonyl]benzoate binding. Ca(2+) is bound by residues aspartate 304, aspartate 307, leucine 309, aspartate 311, and isoleucine 313. 4-[(2-hydroxyethoxy)carbonyl]benzoate contacts are provided by arginine 411 and serine 416. Catalysis depends on charge relay system residues aspartate 492 and histidine 528. Position 528 (histidine 528) interacts with 4-[(2-hydroxyethoxy)carbonyl]benzoate.

This sequence belongs to the tannase family.

Its subcellular location is the cell outer membrane. The catalysed reaction is 4-[(2-hydroxyethoxy)carbonyl]benzoate + H2O = terephthalate + ethylene glycol + H(+). Functionally, involved in the degradation and assimilation of the plastic poly(ethylene terephthalate) (PET), which allows I.sakaiensis to use PET as its major energy and carbon source for growth. Likely acts synergistically with PETase to depolymerize PET. Catalyzes the hydrolysis of mono(2-hydroxyethyl) terephthalate (MHET) into its two environmentally benign monomers, terephthalate and ethylene glycol. Does not show activity against PET, bis(hydroxyethyl) terephthalate (BHET), pNP-aliphatic esters or typical aromatic ester compounds catalyzed by the tannase family enzymes, such as ethyl gallate and ethyl ferulate. This Piscinibacter sakaiensis (Ideonella sakaiensis) protein is Mono(2-hydroxyethyl) terephthalate hydrolase.